Here is a 277-residue protein sequence, read N- to C-terminus: Probable endonuclease 4 (277 aa).

Positions 70, 108, 145, 178, 181, 212, 225, 227, and 257 each coordinate Zn(2+).

This sequence belongs to the AP endonuclease 2 family. Zn(2+) is required as a cofactor.

It catalyses the reaction Endonucleolytic cleavage to 5'-phosphooligonucleotide end-products.. In terms of biological role, endonuclease IV plays a role in DNA repair. It cleaves phosphodiester bonds at apurinic or apyrimidinic (AP) sites, generating a 3'-hydroxyl group and a 5'-terminal sugar phosphate. This is Probable endonuclease 4 from Mycoplasmopsis pulmonis (strain UAB CTIP) (Mycoplasma pulmonis).